A 188-amino-acid chain; its full sequence is UPF0301 protein XC_1365 (188 aa).

This sequence belongs to the UPF0301 (AlgH) family.

The polypeptide is UPF0301 protein XC_1365 (Xanthomonas campestris pv. campestris (strain 8004)).